The following is a 170-amino-acid chain: dCTP pyrophosphatase 1 (170 aa).

The tract at residues 1–25 is disordered; the sequence is MSQAGTGVCGNGGQEDSAAAGPFSF. Ser-2 is subject to N-acetylserine. The residue at position 2 (Ser-2) is a Phosphoserine. Substrate is bound by residues His-38 and 47–51; that span reads WEQFH. Residues Glu-63 and Glu-66 each contribute to the Mg(2+) site. Trp-73 is a substrate binding site. Mg(2+)-binding residues include Glu-95 and Asp-98. Tyr-102 provides a ligand contact to substrate. Residues 149–170 form a disordered region; it reads LSENEAVGSGDPASELGNQAST.

As to quaternary structure, homotetramer. Mg(2+) serves as cofactor.

The protein localises to the cytoplasm. It localises to the cytosol. The catalysed reaction is dCTP + H2O = dCMP + diphosphate + H(+). In terms of biological role, hydrolyzes deoxynucleoside triphosphates (dNTPs) to the corresponding nucleoside monophosphates. Has a strong preference for dCTP and its analogs including 5-iodo-dCTP and 5-methyl-dCTP for which it may even have a higher efficiency. May protect DNA or RNA against the incorporation of these genotoxic nucleotide analogs through their catabolism. This is dCTP pyrophosphatase 1 from Rattus norvegicus (Rat).